The following is a 308-amino-acid chain: tRNA uridine(34) hydroxylase (308 aa).

Positions 129–223 (QEKDTLILDA…YGKHPETQGA (95 aa)) constitute a Rhodanese domain. Catalysis depends on cysteine 183, which acts as the Cysteine persulfide intermediate.

It belongs to the TrhO family.

It carries out the reaction uridine(34) in tRNA + AH2 + O2 = 5-hydroxyuridine(34) in tRNA + A + H2O. Catalyzes oxygen-dependent 5-hydroxyuridine (ho5U) modification at position 34 in tRNAs. This Onion yellows phytoplasma (strain OY-M) protein is tRNA uridine(34) hydroxylase.